Here is a 79-residue protein sequence, read N- to C-terminus: Hematopoietic cell signal transducer (79 aa).

A signal peptide spans 1 to 18 (MVPPGNILFLLLLPVATA). Topologically, residues 19–35 (QMTPGSCSGCGPLSLPL) are extracellular. A helical membrane pass occupies residues 36 to 56 (LAGLVAADAVVSLLIVVVVFV). At 57 to 79 (CARLRSRPTQEDDKIYINMPGRG) the chain is on the cytoplasmic side. Residue tyrosine 72 is modified to Phosphotyrosine. Positions 72 to 74 (YIN) are GRB2 binding site. The tract at residues 72–75 (YINM) is PIK3R1 binding site.

Belongs to the DAP10 family. Homodimer; Disulfide-linked. Heterohexamer composed of four subunits of HCST/DAP10 and two subunits of KLRK1. Interacts (via transmembrane domain) with KLRK1 (via transmembrane domain); the interaction is required for KLRK1 NK cell surface and induces NK cell-mediated cytotoxicity. Interacts with PIK3R1 and GRB2. Interacts with CLEC5A. Forms an CLEC5A/TYROBP/HCST trimolecular complex depending almost solely on TYROBP. Interacts with KLRK1. Interacts with CD300H. In terms of processing, phosphorylated; PIK3R1 and GRB2 associate specifically with tyrosine-phosphorylated HCST. Post-translationally, O-glycosylated.

It is found in the membrane. Functionally, transmembrane adapter protein which associates with KLRK1 to form an activation receptor KLRK1-HCST in lymphoid and myeloid cells; this receptor plays a major role in triggering cytotoxicity against target cells expressing cell surface ligands such as MHC class I chain-related MICA and MICB, and UL16-binding proteins (ULBPs); these ligands are up-regulated by stress conditions and pathological state such as viral infection and tumor transformation. Functions as a docking site for PI3-kinase PIK3R1 and GRB2. Interaction of ULBPs with KLRK1-HCST triggers calcium mobilization and activation of the PIK3R1, MAP2K/ERK, and JAK2/STAT5 signaling pathways. Both PIK3R1 and GRB2 are required for full KLRK1-HCST-mediated activation and ultimate killing of target cells. In NK cells, KLRK1-HCST signaling directly induces cytotoxicity and enhances cytokine production initiated via DAP12/TYROBP-associated receptors. In T-cells, it provides primarily costimulation for TCR-induced signals. KLRK1-HCST receptor plays a role in immune surveillance against tumors and is required for cytolysis of tumors cells; indeed, melanoma cells that do not express KLRK1 ligands escape from immune surveillance mediated by NK cells. In Bos taurus (Bovine), this protein is Hematopoietic cell signal transducer (HCST).